The sequence spans 144 residues: Ribosomal RNA large subunit methyltransferase H (144 aa).

Residues Leu63, Gly92, and 111-116 (LSPMTF) contribute to the S-adenosyl-L-methionine site.

The protein belongs to the RNA methyltransferase RlmH family. In terms of assembly, homodimer.

The protein localises to the cytoplasm. It catalyses the reaction pseudouridine(1915) in 23S rRNA + S-adenosyl-L-methionine = N(3)-methylpseudouridine(1915) in 23S rRNA + S-adenosyl-L-homocysteine + H(+). In terms of biological role, specifically methylates the pseudouridine at position 1915 (m3Psi1915) in 23S rRNA. The chain is Ribosomal RNA large subunit methyltransferase H from Parasynechococcus marenigrum (strain WH8102).